The chain runs to 75 residues: DNA-directed RNA polymerase subunit Rpo5 (75 aa).

The protein belongs to the archaeal Rpo5/eukaryotic RPB5 RNA polymerase subunit family. Part of the RNA polymerase complex.

It localises to the cytoplasm. The enzyme catalyses RNA(n) + a ribonucleoside 5'-triphosphate = RNA(n+1) + diphosphate. DNA-dependent RNA polymerase (RNAP) catalyzes the transcription of DNA into RNA using the four ribonucleoside triphosphates as substrates. In Halobacterium salinarum (strain ATCC 700922 / JCM 11081 / NRC-1) (Halobacterium halobium), this protein is DNA-directed RNA polymerase subunit Rpo5.